The sequence spans 237 residues: Ribonuclease 3 (237 aa).

Positions 3 to 133 constitute an RNase III domain; it reads SRQPLLDALG…LLGAIYLQHG (131 aa). A Mg(2+)-binding site is contributed by Glu-43. The active site involves Asp-47. The Mg(2+) site is built by Asp-119 and Glu-122. Glu-122 is an active-site residue. Residues 160–228 form the DRBM domain; sequence DWKTSLQELT…AAATWKALDV (69 aa).

Belongs to the ribonuclease III family. Homodimer. Mg(2+) serves as cofactor.

It localises to the cytoplasm. It carries out the reaction Endonucleolytic cleavage to 5'-phosphomonoester.. Its function is as follows. Digests double-stranded RNA. Involved in the processing of primary rRNA transcript to yield the immediate precursors to the large and small rRNAs (23S and 16S). Processes some mRNAs, and tRNAs when they are encoded in the rRNA operon. Processes pre-crRNA and tracrRNA of type II CRISPR loci if present in the organism. The polypeptide is Ribonuclease 3 (Mycolicibacterium paratuberculosis (strain ATCC BAA-968 / K-10) (Mycobacterium paratuberculosis)).